We begin with the raw amino-acid sequence, 297 residues long: Cell division protein ZipA (297 aa).

Position 1 (methionine 1) is a topological domain, periplasmic. The helical transmembrane segment at 2-22 (EIGLREWLILIGIIVIAGILF) threads the bilayer. Over 23-297 (DGWRRMRGGK…FERRALTQKR (275 aa)) the chain is Cytoplasmic. The tract at residues 48 to 150 (DEEGGSAEVL…GAAPASSSVK (103 aa)) is disordered. The segment covering 83-92 (ARDREREPKP) has biased composition (basic and acidic residues). A compositionally biased stretch (acidic residues) spans 124-133 (LFADSDDDFA). Residues 136–149 (NNRSSGAAPASSSV) show a composition bias toward polar residues.

Belongs to the ZipA family. In terms of assembly, interacts with FtsZ via their C-terminal domains.

The protein resides in the cell inner membrane. In terms of biological role, essential cell division protein that stabilizes the FtsZ protofilaments by cross-linking them and that serves as a cytoplasmic membrane anchor for the Z ring. Also required for the recruitment to the septal ring of downstream cell division proteins. This is Cell division protein ZipA from Pseudomonas putida (strain ATCC 700007 / DSM 6899 / JCM 31910 / BCRC 17059 / LMG 24140 / F1).